Reading from the N-terminus, the 500-residue chain is Protein SLENDER RICE1-LIKE 2 (500 aa).

Residues 68–454 (KELEKMALRS…QRLYSASAWR (387 aa)) enclose the GRAS domain. The segment at 75-135 (LRSVNLMVTC…DALAERLFPA (61 aa)) is leucine repeat I (LRI). The VHIID stretch occupies residues 154–219 (FRGFYEAGPY…GGPPFLRITG (66 aa)). The short motif at 185–189 (VHVID) is the VHIID element. Residues 233–265 (DVGLRLAEFARSCSVPFAFRGIAADQLDGLRPW) form a leucine repeat II (LRII) region. Residues 275-376 (VAINSVLQLH…EAYLQGEIAD (102 aa)) are PFYRE. The LXXLL motif motif lies at 283-287 (LHRLL). Positions 379-454 (SREGSSRVER…QRLYSASAWR (76 aa)) are SAW. Positions 466–500 (SGAADAMEESQNSNTNGGGGGSSGGGHGALNQIMQ) are disordered. Gly residues predominate over residues 481–493 (NGGGGGSSGGGHG).

Belongs to the GRAS family. In terms of tissue distribution, expressed at low levels in leaf blades, leaf sheaths, rachis and flowers. Expressed in the embryo of immature seeds.

The protein resides in the nucleus. Its function is as follows. Probable transcriptional regulator that acts as a repressor of the gibberellin (GA) signaling pathway. Its repressive activity is weaker than that of SLR1. Its overexpression prevents the GA signaling pathway and induces a dwarf phenotype in Arabidopsis thaliana plants. This Oryza sativa subsp. japonica (Rice) protein is Protein SLENDER RICE1-LIKE 2.